The primary structure comprises 3718 residues: Laminin subunit alpha-5 (3718 aa).

An N-terminal signal peptide occupies residues 1–40 (MAKRGGQLCAGSAPGALGPRSPAPRPLLLLLAGLALVGEA). Residues 46–304 (DGFSLHPPYF…SIKDISIGGR (259 aa)) form the Laminin N-terminal domain. N-linked (GlcNAc...) asparagine glycans are attached at residues asparagine 100, asparagine 148, and asparagine 248. 12 cysteine pairs are disulfide-bonded: cysteine 305–cysteine 314, cysteine 307–cysteine 327, cysteine 329–cysteine 338, cysteine 341–cysteine 361, cysteine 364–cysteine 373, cysteine 366–cysteine 398, cysteine 401–cysteine 410, cysteine 413–cysteine 431, cysteine 434–cysteine 445, cysteine 436–cysteine 452, cysteine 454–cysteine 463, and cysteine 466–cysteine 476. 3 consecutive Laminin EGF-like domains span residues 305 to 363 (CVCH…ECQS), 364 to 433 (CNCH…VCRP), and 434 to 479 (CDCE…CYPL). An N-linked (GlcNAc...) asparagine glycan is attached at asparagine 383. A glycan (N-linked (GlcNAc...) asparagine) is linked at asparagine 457. Asparagine 485 carries an N-linked (GlcNAc...) asparagine glycan. 29 disulfides stabilise this stretch: cysteine 500/cysteine 512, cysteine 502/cysteine 521, cysteine 523/cysteine 532, cysteine 535/cysteine 544, cysteine 547/cysteine 559, cysteine 549/cysteine 566, cysteine 568/cysteine 577, cysteine 580/cysteine 590, cysteine 593/cysteine 605, cysteine 595/cysteine 611, cysteine 613/cysteine 622, cysteine 625/cysteine 635, cysteine 638/cysteine 650, cysteine 640/cysteine 656, cysteine 658/cysteine 667, cysteine 670/cysteine 680, cysteine 683/cysteine 695, cysteine 685/cysteine 702, cysteine 704/cysteine 713, cysteine 716/cysteine 731, cysteine 752/cysteine 761, cysteine 764/cysteine 779, cysteine 782/cysteine 796, cysteine 784/cysteine 802, cysteine 804/cysteine 813, cysteine 816/cysteine 831, cysteine 834/cysteine 846, cysteine 836/cysteine 853, and cysteine 855/cysteine 864. Laminin EGF-like domains are found at residues 500-546 (CDCN…SCHP), 547-592 (CQCS…LCQL), 593-637 (CGCS…DCHA), 638-682 (CACD…SCIP), 683-728 (CHCS…YCEA), 729-781 (GSCH…GCTR), and 782-833 (CSCD…GCRS). The Laminin EGF-like 11; truncated domain occupies 834–855 (CRCDVGGALGQGCEPKTGACRC). The domain IV 1 (domain IV B) stretch occupies residues 856-1442 (RPNTQGPTCS…SLFYNNGALP (587 aa)). N-linked (GlcNAc...) asparagine glycosylation is found at asparagine 905, asparagine 926, and asparagine 964. The disordered stretch occupies residues 1253–1284 (LTQSQELSPGAPPEGPQPRPPTAVDPNAEPTL). The segment covering 1262-1275 (GAPPEGPQPRPPTA) has biased composition (pro residues). N-linked (GlcNAc...) asparagine glycosylation is present at asparagine 1335. Intrachain disulfides connect cysteine 1443–cysteine 1455, cysteine 1445–cysteine 1462, cysteine 1464–cysteine 1473, cysteine 1476–cysteine 1486, cysteine 1489–cysteine 1496, cysteine 1491–cysteine 1503, cysteine 1505–cysteine 1514, cysteine 1517–cysteine 1530, cysteine 1533–cysteine 1548, cysteine 1535–cysteine 1555, cysteine 1557–cysteine 1566, cysteine 1569–cysteine 1579, cysteine 1582–cysteine 1594, cysteine 1584–cysteine 1601, cysteine 1603–cysteine 1612, and cysteine 1615–cysteine 1630. Laminin EGF-like domains lie at 1443–1488 (CGCH…NCRP), 1489–1532 (CDCG…GCEE), 1533–1581 (CNCS…SCRP), and 1582–1632 (CDCH…GCTR). Asparagine 1534 is a glycosylation site (N-linked (GlcNAc...) asparagine). In terms of domain architecture, Laminin EGF-like 16; first part spans 1633-1642 (CFCFGATERC). One can recognise a Laminin IV type A domain in the interval 1646–1831 (NLARHEFVDM…RGPPASNVEL (186 aa)). Short sequence motifs (cell attachment site) lie at residues 1723–1725 (RGD) and 1839–1841 (RGD). Residues 1832-1864 (CMCPANYRGDSCQECAPGYYRDTKGLFLGRCVP) enclose the Laminin EGF-like 16; second part domain. Disulfide bonds link cysteine 1865/cysteine 1874, cysteine 1867/cysteine 1881, cysteine 1884/cysteine 1893, cysteine 1896/cysteine 1912, cysteine 1915/cysteine 1930, cysteine 1917/cysteine 1939, cysteine 1941/cysteine 1950, cysteine 1953/cysteine 1968, cysteine 1971/cysteine 1986, cysteine 1973/cysteine 1993, cysteine 1996/cysteine 2005, cysteine 2008/cysteine 2022, cysteine 2025/cysteine 2035, cysteine 2027/cysteine 2042, cysteine 2044/cysteine 2053, cysteine 2056/cysteine 2069, cysteine 2072/cysteine 2083, cysteine 2074/cysteine 2090, cysteine 2092/cysteine 2101, cysteine 2104/cysteine 2116, cysteine 2119/cysteine 2126, cysteine 2121/cysteine 2133, cysteine 2135/cysteine 2144, and cysteine 2147/cysteine 2166. Laminin EGF-like domains lie at 1865 to 1914 (CQCH…PCVS), 1915 to 1970 (CPCP…SCQP), 1971 to 2024 (CDCS…NCTR), 2025 to 2071 (CDCS…GCRP), 2072 to 2118 (CACG…GCRR), and 2119 to 2168 (CQCP…HCEV). A glycan (N-linked (GlcNAc...) asparagine) is linked at asparagine 2021. The tract at residues 2169 to 2735 (CDHCVVLLLD…AQARSAASKV (567 aa)) is domain II and I. N-linked (GlcNAc...) asparagine glycans are attached at residues asparagine 2198, asparagine 2211, asparagine 2365, asparagine 2395, asparagine 2425, asparagine 2503, and asparagine 2570. Coiled coils occupy residues 2205–2257 (ARLH…SQAT) and 2330–2464 (TRDL…ASLD). 2 coiled-coil regions span residues 2604–2621 (ARKNQLAAQIQEAQAMLA) and 2639–2705 (AEAL…LENR). N-linked (GlcNAc...) asparagine glycosylation occurs at asparagine 2709. Laminin G-like domains lie at 2736 to 2933 (KVSM…DKPC), 2947 to 3119 (GSYL…SFGC), 3128 to 3296 (TMTF…SVGC), 3337 to 3511 (AYQF…VTPC), and 3518 to 3689 (DGLF…MRGC). Cystine bridges form between cysteine 2903/cysteine 2933 and cysteine 3094/cysteine 3119. Residues asparagine 3111, asparagine 3213, asparagine 3261, and asparagine 3291 are each glycosylated (N-linked (GlcNAc...) asparagine). 2 cysteine pairs are disulfide-bonded: cysteine 3265/cysteine 3296 and cysteine 3488/cysteine 3511. 2 N-linked (GlcNAc...) asparagine glycosylation sites follow: asparagine 3623 and asparagine 3673. Cysteine 3661 and cysteine 3689 are disulfide-bonded.

In terms of assembly, laminin is a complex glycoprotein, consisting of three different polypeptide chains (alpha, beta, gamma), which are bound to each other by disulfide bonds into a cross-shaped molecule comprising one long and three short arms with globules at each end. Alpha-5 is a subunit of laminin-10 (laminin-511), laminin-11 (laminin-521) and laminin-15 (laminin-523). In terms of tissue distribution, in adult, high levels in heart, lung, and kidney; lower in brain, muscle and testis; very low in liver, gut and skin.

It localises to the secreted. It is found in the extracellular space. The protein localises to the extracellular matrix. The protein resides in the basement membrane. In terms of biological role, binding to cells via a high affinity receptor, laminin is thought to mediate the attachment, migration and organization of cells into tissues during embryonic development by interacting with other extracellular matrix components. Alpha-5 may be the major laminin alpha chain of adult epithelial and/or endothelial basal laminae. Plays a role in the regulation of skeletogenesis, through a mechanism that involves integrin-mediated signaling and PTK2B/PYK2. The chain is Laminin subunit alpha-5 (Lama5) from Mus musculus (Mouse).